The primary structure comprises 152 residues: UPF0178 protein swp_1285 (152 aa).

It belongs to the UPF0178 family.

The sequence is that of UPF0178 protein swp_1285 from Shewanella piezotolerans (strain WP3 / JCM 13877).